The sequence spans 489 residues: Coiled-coil domain-containing protein 77 (489 aa).

Ser38 is modified (phosphoserine). Coiled-coil stretches lie at residues 57–120 and 212–487; these read SQEL…QVCL and ERHQ…NALR.

The polypeptide is Coiled-coil domain-containing protein 77 (Ccdc77) (Mus musculus (Mouse)).